The sequence spans 216 residues: Snake venom metalloproteinase HT-1 (216 aa).

The 87-residue stretch at 8–94 (PPVCGNELLE…DCPMDDFHRN (87 aa)) folds into the Disintegrin domain. Val-10, Asn-13, Leu-15, Glu-17, Glu-20, and Asp-23 together coordinate Ca(2+). Intrachain disulfides connect Cys-11/Cys-40, Cys-22/Cys-35, Cys-24/Cys-30, Cys-34/Cys-57, Cys-48/Cys-54, Cys-53/Cys-79, Cys-66/Cys-86, Cys-73/Cys-105, Cys-98/Cys-110, Cys-117/Cys-167, Cys-132/Cys-178, Cys-145/Cys-155, Cys-162/Cys-204, and Cys-198/Cys-209. A D/ECD-tripeptide motif is present at residues 72 to 74 (ECD). Asn-175 carries an N-linked (GlcNAc...) asparagine glycan.

The protein belongs to the venom metalloproteinase (M12B) family. P-III subfamily. P-IIIa sub-subfamily. In terms of assembly, monomer. Requires Zn(2+) as cofactor. Expressed by the venom gland.

It is found in the secreted. Its function is as follows. Zinc protease from snake venom that induces hemorrhage. This is Snake venom metalloproteinase HT-1 from Crotalus ruber ruber (Red diamond rattlesnake).